A 269-amino-acid polypeptide reads, in one-letter code: Formamidopyrimidine-DNA glycosylase (269 aa).

Pro-2 functions as the Schiff-base intermediate with DNA in the catalytic mechanism. The Proton donor role is filled by Glu-3. Lys-58 (proton donor; for beta-elimination activity) is an active-site residue. The DNA site is built by His-91, Arg-110, and Lys-150. The segment at Ser-235 to Thr-269 adopts an FPG-type zinc-finger fold. Catalysis depends on Arg-259, which acts as the Proton donor; for delta-elimination activity.

This sequence belongs to the FPG family. As to quaternary structure, monomer. It depends on Zn(2+) as a cofactor.

The enzyme catalyses Hydrolysis of DNA containing ring-opened 7-methylguanine residues, releasing 2,6-diamino-4-hydroxy-5-(N-methyl)formamidopyrimidine.. The catalysed reaction is 2'-deoxyribonucleotide-(2'-deoxyribose 5'-phosphate)-2'-deoxyribonucleotide-DNA = a 3'-end 2'-deoxyribonucleotide-(2,3-dehydro-2,3-deoxyribose 5'-phosphate)-DNA + a 5'-end 5'-phospho-2'-deoxyribonucleoside-DNA + H(+). Its function is as follows. Involved in base excision repair of DNA damaged by oxidation or by mutagenic agents. Acts as a DNA glycosylase that recognizes and removes damaged bases. Has a preference for oxidized purines, such as 7,8-dihydro-8-oxoguanine (8-oxoG). Has AP (apurinic/apyrimidinic) lyase activity and introduces nicks in the DNA strand. Cleaves the DNA backbone by beta-delta elimination to generate a single-strand break at the site of the removed base with both 3'- and 5'-phosphates. The chain is Formamidopyrimidine-DNA glycosylase from Vesicomyosocius okutanii subsp. Calyptogena okutanii (strain HA).